The primary structure comprises 162 residues: AP-1 complex subunit sigma-1 (162 aa).

The protein belongs to the adaptor complexes small subunit family. As to quaternary structure, adaptor protein complex 1 (AP-1) is a heterotetramer composed of two large adaptins (gamma-type subunit apl4 and beta-type subunit apl2), a medium adaptin (mu-type subunit apm1) and a small adaptin (sigma-type subunit aps1). AP-1 interacts with clathrin.

It localises to the cytoplasm. The protein resides in the nucleus. Its subcellular location is the cytoplasmic vesicle. The protein localises to the clathrin-coated vesicle membrane. It is found in the endosome. It localises to the golgi apparatus. Component of the AP-1 complex which links clathrin to receptors in coated vesicles. Clathrin-associated protein complexes are believed to interact with the cytoplasmic tails of membrane proteins, leading to their selection and concentration. In Schizosaccharomyces pombe (strain 972 / ATCC 24843) (Fission yeast), this protein is AP-1 complex subunit sigma-1 (vas2).